Here is a 224-residue protein sequence, read N- to C-terminus: Cerebellin-2 (224 aa).

The N-terminal stretch at methionine 1–alanine 51 is a signal peptide. N-linked (GlcNAc...) asparagine glycosylation is found at asparagine 53 and asparagine 110. The C1q domain maps to serine 88–leucine 224.

As to quaternary structure, homohexamer; disulfide-linked homotrimers. The trimers are assembled via the globular C1q domains. The trimers associate via N-terminal cysteine residues to form disulfide-linked hexamers. May form homooligomers or heterooligomers with CBLN1 and CBLN3 prior to secretion. Once secreted, does not interact with other CBLN family members. Interacts with GRID2, and more weakly with GRID1. Interacts with NRXN1 and NRXN2 long and short isoforms produced by alternative promoter usage. Weakly interacts with NRXN3 short isoform and not at all with NRXN3 long isoform. In terms of tissue distribution, expressed in various brain regions with higher levels in the olfactory bulb, cerebral cortex, certain thalamic and hypothalamic nuclei, superior and inferior colliculi and some brainstem nuclei. Highly expressed in the dorsal medial habenula.

It is found in the secreted. Its function is as follows. Acts as a synaptic organizer in specific subsets of neurons in the brain. Essential for long-term maintenance but not establishment of excitatory synapses. Functions as part of a trans-synaptic complex by binding to postsynaptic GRID1 and presynaptic neurexins. This interaction helps regulate the activity of NMDA and AMPA receptors at hippocampal synapses without affecting synapse formation. NRXN1B-CBLN2-GRID1 complex transduce presynaptic signals into postsynaptic NMDAR response. NRXN3B-CBLN2-GRID1 complex transduce presynaptic signals into postsynaptic AMPAR response. In Mus musculus (Mouse), this protein is Cerebellin-2 (Cbln2).